The chain runs to 506 residues: Histidine ammonia-lyase (506 aa).

Positions 143–145 (ASG) form a cross-link, 5-imidazolinone (Ala-Gly). Residue Ser-144 is modified to 2,3-didehydroalanine (Ser).

The protein belongs to the PAL/histidase family. Post-translationally, contains an active site 4-methylidene-imidazol-5-one (MIO), which is formed autocatalytically by cyclization and dehydration of residues Ala-Ser-Gly.

The protein localises to the cytoplasm. It catalyses the reaction L-histidine = trans-urocanate + NH4(+). The protein operates within amino-acid degradation; L-histidine degradation into L-glutamate; N-formimidoyl-L-glutamate from L-histidine: step 1/3. The sequence is that of Histidine ammonia-lyase from Salmonella paratyphi A (strain ATCC 9150 / SARB42).